Consider the following 142-residue polypeptide: Hemoglobin subunit pi (142 aa).

The Globin domain occupies 2-142; that stretch reads ALTQAEKAAV…ISSVLTEKYR (141 aa). Heme b-binding residues include His-59 and His-88.

Belongs to the globin family.

In terms of biological role, the pi' chain is the counterpart of the alpha chain in the major early embryonic hemoglobin P. This Gallus gallus (Chicken) protein is Hemoglobin subunit pi.